The chain runs to 893 residues: Alanine--tRNA ligase (893 aa).

Residues His-573, His-577, Cys-676, and His-680 each coordinate Zn(2+). The segment at 853–872 (LGGGGGGKDDLAQGGGQDPS) is disordered.

Belongs to the class-II aminoacyl-tRNA synthetase family. It depends on Zn(2+) as a cofactor.

The protein localises to the cytoplasm. It carries out the reaction tRNA(Ala) + L-alanine + ATP = L-alanyl-tRNA(Ala) + AMP + diphosphate. Catalyzes the attachment of alanine to tRNA(Ala) in a two-step reaction: alanine is first activated by ATP to form Ala-AMP and then transferred to the acceptor end of tRNA(Ala). Also edits incorrectly charged Ser-tRNA(Ala) and Gly-tRNA(Ala) via its editing domain. This chain is Alanine--tRNA ligase, found in Kineococcus radiotolerans (strain ATCC BAA-149 / DSM 14245 / SRS30216).